The sequence spans 368 residues: Type 2 DNA topoisomerase 6 subunit A (368 aa).

Residues threonine 9–alanine 148 enclose the Topo IIA-type catalytic domain. Catalysis depends on tyrosine 103, which acts as the O-(5'-phospho-DNA)-tyrosine intermediate. The Mg(2+) site is built by glutamate 201 and aspartate 253.

It belongs to the TOP6A family. In terms of assembly, homodimer. Heterotetramer of two Top6A and two Top6B chains. Mg(2+) serves as cofactor.

The enzyme catalyses ATP-dependent breakage, passage and rejoining of double-stranded DNA.. Functionally, relaxes both positive and negative superturns and exhibits a strong decatenase activity. The chain is Type 2 DNA topoisomerase 6 subunit A from Natronomonas pharaonis (strain ATCC 35678 / DSM 2160 / CIP 103997 / JCM 8858 / NBRC 14720 / NCIMB 2260 / Gabara) (Halobacterium pharaonis).